The primary structure comprises 238 residues: Large ribosomal subunit protein uL1 (238 aa).

Belongs to the universal ribosomal protein uL1 family. As to quaternary structure, part of the 50S ribosomal subunit.

Functionally, binds directly to 23S rRNA. The L1 stalk is quite mobile in the ribosome, and is involved in E site tRNA release. Its function is as follows. Protein L1 is also a translational repressor protein, it controls the translation of the L11 operon by binding to its mRNA. The protein is Large ribosomal subunit protein uL1 of Trichodesmium erythraeum (strain IMS101).